Here is a 387-residue protein sequence, read N- to C-terminus: Protein salvador homolog 1 (387 aa).

2 positions are modified to phosphoserine: serine 95 and serine 138. 2 WW domains span residues 201–234 (LPLP…HPLE) and 236–269 (EGLP…HPCA). Phosphothreonine is present on threonine 212. The SARAH domain maps to 323-370 (ILKWELFQLADLDTYQGMLKLLFMKELEQIVKLYEAYRQALVTELENR).

Homodimer. Stabilized through interaction with STK3/MST2 or STK4/MST1. Interacts (via SARAH domain) with isoform 1 of NEK2. Interacts with ESR1 only in the presence of STK3/MST2. Interacts with WTIP and AJUBA. Phosphorylated by STK3/MST2 and STK4/MST1. Phosphorylation is not required for SAV1 stability and may increase the number of protein binding sites on the scaffold molecule.

The protein resides in the nucleus. It is found in the cytoplasm. Regulator of STK3/MST2 and STK4/MST1 in the Hippo signaling pathway which plays a pivotal role in organ size control and tumor suppression by restricting proliferation and promoting apoptosis. The core of this pathway is composed of a kinase cascade wherein STK3/MST2 and STK4/MST1, in complex with its regulatory protein SAV1, phosphorylates and activates LATS1/2 in complex with its regulatory protein MOB1, which in turn phosphorylates and inactivates YAP1 oncoprotein and WWTR1/TAZ. Phosphorylation of YAP1 by LATS1/2 inhibits its translocation into the nucleus to regulate cellular genes important for cell proliferation, cell death, and cell migration. SAV1 is required for STK3/MST2 and STK4/MST1 activation and promotes cell-cycle exit and terminal differentiation in developing epithelial tissues. Plays a role in centrosome disjunction by regulating the localization of NEK2 to centrosomes, and its ability to phosphorylate CROCC and CEP250. In conjunction with STK3/MST2, activates the transcriptional activity of ESR1 through the modulation of its phosphorylation. In Rattus norvegicus (Rat), this protein is Protein salvador homolog 1.